Reading from the N-terminus, the 108-residue chain is Urease subunit gamma (108 aa).

The protein belongs to the urease gamma subunit family. In terms of assembly, heterotrimer of UreA (gamma), UreB (beta) and UreC (alpha) subunits. Three heterotrimers associate to form the active enzyme.

Its subcellular location is the cytoplasm. It catalyses the reaction urea + 2 H2O + H(+) = hydrogencarbonate + 2 NH4(+). It functions in the pathway nitrogen metabolism; urea degradation; CO(2) and NH(3) from urea (urease route): step 1/1. In Trichodesmium erythraeum (strain IMS101), this protein is Urease subunit gamma.